We begin with the raw amino-acid sequence, 339 residues long: Phomopsene synthase (339 aa).

Mg(2+) is bound by residues Asp-89, Asp-94, Asn-224, Ser-228, and Glu-232.

Belongs to the terpene synthase family. The cofactor is Mg(2+).

The enzyme catalyses (2E,6E,10E)-geranylgeranyl diphosphate = phomopsene + diphosphate. It catalyses the reaction (2E,6E,10E)-geranylgeranyl diphosphate = allokutznerene + diphosphate. The protein operates within secondary metabolite biosynthesis; terpenoid biosynthesis. Its function is as follows. Diterpene synthase that catalyzes the conversion of geranylgeranyl diphosphate (GGPP) to phomopsene, a diterpene previously reported from the fungus P.amygdali. Phomopsene is the main product, but the enzyme can also produce allokutznerene (about 50% of phomopsene production activity) and traces of spiroviolene. Cannot use geranyl diphosphate (GPP), farnesyl diphosphate (FPP) and geranylfarnesyl diphosphate (GFPP). This Allokutzneria albata (Kibdelosporangium albatum) protein is Phomopsene synthase.